Consider the following 282-residue polypeptide: Elongation factor Ts (282 aa).

Positions 80-83 (TDFV) are involved in Mg(2+) ion dislocation from EF-Tu.

It belongs to the EF-Ts family.

It localises to the cytoplasm. Its function is as follows. Associates with the EF-Tu.GDP complex and induces the exchange of GDP to GTP. It remains bound to the aminoacyl-tRNA.EF-Tu.GTP complex up to the GTP hydrolysis stage on the ribosome. This Chlamydia trachomatis serovar L2b (strain UCH-1/proctitis) protein is Elongation factor Ts.